Reading from the N-terminus, the 88-residue chain is Small ribosomal subunit protein bS16 (88 aa).

It belongs to the bacterial ribosomal protein bS16 family.

This Anaeromyxobacter sp. (strain K) protein is Small ribosomal subunit protein bS16.